A 269-amino-acid chain; its full sequence is F-box protein At5g52880 (269 aa).

The region spanning 109-155 (DIDIPSLPQDILIHIFSFLEISSLVSSAQVSRSWNQATHENSLWQSQ) is the F-box domain.

In Arabidopsis thaliana (Mouse-ear cress), this protein is F-box protein At5g52880.